Reading from the N-terminus, the 123-residue chain is Small ribosomal subunit protein uS12 (123 aa).

Residue Asp-89 is modified to 3-methylthioaspartic acid. Residues Ser-101–Lys-123 form a disordered region. Over residues Gly-113–Lys-123 the composition is skewed to basic residues.

Belongs to the universal ribosomal protein uS12 family. Part of the 30S ribosomal subunit. Contacts proteins S8 and S17. May interact with IF1 in the 30S initiation complex.

With S4 and S5 plays an important role in translational accuracy. Its function is as follows. Interacts with and stabilizes bases of the 16S rRNA that are involved in tRNA selection in the A site and with the mRNA backbone. Located at the interface of the 30S and 50S subunits, it traverses the body of the 30S subunit contacting proteins on the other side and probably holding the rRNA structure together. The combined cluster of proteins S8, S12 and S17 appears to hold together the shoulder and platform of the 30S subunit. The chain is Small ribosomal subunit protein uS12 from Azotobacter vinelandii (strain DJ / ATCC BAA-1303).